Consider the following 282-residue polypeptide: tRNA pseudouridine synthase B (282 aa).

Residue aspartate 39 is the Nucleophile of the active site.

This sequence belongs to the pseudouridine synthase TruB family. Type 1 subfamily.

It carries out the reaction uridine(55) in tRNA = pseudouridine(55) in tRNA. Responsible for synthesis of pseudouridine from uracil-55 in the psi GC loop of transfer RNAs. The sequence is that of tRNA pseudouridine synthase B from Borreliella burgdorferi (strain ATCC 35210 / DSM 4680 / CIP 102532 / B31) (Borrelia burgdorferi).